Here is a 1372-residue protein sequence, read N- to C-terminus: DNA-directed RNA polymerase subunit beta (1372 aa).

Belongs to the RNA polymerase beta chain family. The RNAP catalytic core consists of 2 alpha, 1 beta, 1 beta' and 1 omega subunit. When a sigma factor is associated with the core the holoenzyme is formed, which can initiate transcription.

The enzyme catalyses RNA(n) + a ribonucleoside 5'-triphosphate = RNA(n+1) + diphosphate. Functionally, DNA-dependent RNA polymerase catalyzes the transcription of DNA into RNA using the four ribonucleoside triphosphates as substrates. The polypeptide is DNA-directed RNA polymerase subunit beta (Psychrobacter cryohalolentis (strain ATCC BAA-1226 / DSM 17306 / VKM B-2378 / K5)).